The primary structure comprises 78 residues: Large ribosomal subunit protein bL28 (78 aa).

It belongs to the bacterial ribosomal protein bL28 family.

The protein is Large ribosomal subunit protein bL28 of Synechococcus sp. (strain CC9311).